The sequence spans 115 residues: SPbeta prophage-derived uncharacterized membrane protein YosE (115 aa).

3 helical membrane passes run 20–42 (IVVGLLIFVEALTMSLIVYYGLN), 58–78 (VHVTLPHAFVIGVLLNVFVKG), and 95–115 (GKSLFHSTFALIVLYVSTLFI).

The protein resides in the cell membrane. In Bacillus subtilis (strain 168), this protein is SPbeta prophage-derived uncharacterized membrane protein YosE (yosE).